The chain runs to 65 residues: Small ribosomal subunit protein eS27 (65 aa).

Zn(2+) contacts are provided by Cys-20, Cys-23, Cys-39, and Cys-42. Residues 20–42 form a C4-type zinc finger; the sequence is CIDCGNEQIVFSHPATRVRCNVC.

The protein belongs to the eukaryotic ribosomal protein eS27 family. In terms of assembly, part of the 30S ribosomal subunit. The cofactor is Zn(2+).

This Pyrococcus abyssi (strain GE5 / Orsay) protein is Small ribosomal subunit protein eS27.